Consider the following 177-residue polypeptide: Large ribosomal subunit protein uL6 (177 aa).

Belongs to the universal ribosomal protein uL6 family. In terms of assembly, part of the 50S ribosomal subunit.

Its function is as follows. This protein binds to the 23S rRNA, and is important in its secondary structure. It is located near the subunit interface in the base of the L7/L12 stalk, and near the tRNA binding site of the peptidyltransferase center. This is Large ribosomal subunit protein uL6 from Aliivibrio salmonicida (strain LFI1238) (Vibrio salmonicida (strain LFI1238)).